Reading from the N-terminus, the 152-residue chain is Large ribosomal subunit protein uL15 (152 aa).

The disordered stretch occupies residues 1–56; that stretch reads MELNTLKPAKNSVKQNTRYGRGQGSGKGGTSTRGHKGAKSRSGYKSKPGFEGGQLP. The segment covering 21 to 31 has biased composition (gly residues); that stretch reads RGQGSGKGGTS. Positions 33–44 are enriched in basic residues; the sequence is RGHKGAKSRSGY.

It belongs to the universal ribosomal protein uL15 family. In terms of assembly, part of the 50S ribosomal subunit.

Binds to the 23S rRNA. The protein is Large ribosomal subunit protein uL15 of Amoebophilus asiaticus (strain 5a2).